The primary structure comprises 224 residues: Ribose-5-phosphate isomerase A (224 aa).

Substrate is bound by residues 32-35, 85-88, and 98-101; these read TGST, DGAD, and KGGG. Glutamate 107 acts as the Proton acceptor in catalysis. Lysine 125 lines the substrate pocket.

Belongs to the ribose 5-phosphate isomerase family. Homodimer.

It catalyses the reaction aldehydo-D-ribose 5-phosphate = D-ribulose 5-phosphate. The protein operates within carbohydrate degradation; pentose phosphate pathway; D-ribose 5-phosphate from D-ribulose 5-phosphate (non-oxidative stage): step 1/1. Catalyzes the reversible conversion of ribose-5-phosphate to ribulose 5-phosphate. The protein is Ribose-5-phosphate isomerase A of Pseudomonas putida (strain ATCC 700007 / DSM 6899 / JCM 31910 / BCRC 17059 / LMG 24140 / F1).